Reading from the N-terminus, the 221-residue chain is Histone H1.3 (221 aa).

Residues 1 to 17 (MSETAPAAPAAPAPVEK) are compositionally biased toward low complexity. A disordered region spans residues 1 to 42 (MSETAPAAPAAPAPVEKTPVKKKAKKTGAAAGKRKASGPPVS). Position 2 is an N-acetylserine (Ser2). A Phosphoserine modification is found at Ser2. An N6-acetyllysine modification is found at Lys17. At Thr18 the chain carries Phosphothreonine. Over residues 20 to 36 (VKKKAKKTGAAAGKRKA) the composition is skewed to basic residues. Residues Lys33, Lys35, and Lys53 each carry the N6-(beta-hydroxybutyryl)lysine modification. In terms of domain architecture, H15 spans 37 to 110 (SGPPVSELIT…GASGSFKLNK (74 aa)). Arg55 carries the citrulline modification. N6-(beta-hydroxybutyryl)lysine is present on residues Lys65, Lys86, and Lys91. Residues 92–221 (GTLVQTKGTG…KAKKAAPRKK (130 aa)) are disordered. At Ser105 the chain carries Phosphoserine; by PKC. Residues Lys107 and Lys141 each carry the N6-(beta-hydroxybutyryl)lysine modification. Composition is skewed to basic residues over residues 120-141 (KAKKAGAAKAKKPAGAAKKPKK), 150-161 (KTAKKTPKKAKK), 170-187 (KVSKSPKKVKAAKPKKAA), and 194-221 (KAPKAKASKPKASKPKATKAKKAAPRKK).

This sequence belongs to the histone H1/H5 family. Post-translationally, H1 histones are progressively phosphorylated during the cell cycle, becoming maximally phosphorylated during late G2 phase and M phase, and being dephosphorylated sharply thereafter. In terms of processing, hydroxybutyrylation of histones is induced by starvation. Citrullination at Arg-55 (H1R54ci) by PADI4 takes place within the DNA-binding site of H1 and results in its displacement from chromatin and global chromatin decondensation, thereby promoting pluripotency and stem cell maintenance.

It is found in the nucleus. Its subcellular location is the chromosome. Histone H1 protein binds to linker DNA between nucleosomes forming the macromolecular structure known as the chromatin fiber. Histones H1 are necessary for the condensation of nucleosome chains into higher-order structured fibers. Also acts as a regulator of individual gene transcription through chromatin remodeling, nucleosome spacing and DNA methylation. The protein is Histone H1.3 of Mus musculus (Mouse).